A 271-amino-acid chain; its full sequence is Shikimate dehydrogenase (NADP(+)) (271 aa).

Shikimate-binding positions include 19 to 21 and Thr65; that span reads SLS. Catalysis depends on Lys69, which acts as the Proton acceptor. Glu81 is a binding site for NADP(+). Shikimate is bound by residues Asn90 and Asp105. Residues 128–132, 150–155, and Ile211 each bind NADP(+); these read GAGGA and NRTIEK. Shikimate is bound at residue Tyr213. Gly234 is a binding site for NADP(+).

Belongs to the shikimate dehydrogenase family. As to quaternary structure, homodimer.

The enzyme catalyses shikimate + NADP(+) = 3-dehydroshikimate + NADPH + H(+). It functions in the pathway metabolic intermediate biosynthesis; chorismate biosynthesis; chorismate from D-erythrose 4-phosphate and phosphoenolpyruvate: step 4/7. Its function is as follows. Involved in the biosynthesis of the chorismate, which leads to the biosynthesis of aromatic amino acids. Catalyzes the reversible NADPH linked reduction of 3-dehydroshikimate (DHSA) to yield shikimate (SA). The protein is Shikimate dehydrogenase (NADP(+)) of Pyrococcus furiosus (strain ATCC 43587 / DSM 3638 / JCM 8422 / Vc1).